Reading from the N-terminus, the 202-residue chain is Small ribosomal subunit protein uS2 (202 aa).

This sequence belongs to the universal ribosomal protein uS2 family.

This is Small ribosomal subunit protein uS2 from Methanocorpusculum labreanum (strain ATCC 43576 / DSM 4855 / Z).